Here is a 567-residue protein sequence, read N- to C-terminus: Urease subunit alpha (567 aa).

A Urease domain is found at 129–567 (GGIDAHIHFI…LPMAQRYFLF (439 aa)). Residues H134, H136, and K217 each coordinate Ni(2+). K217 is modified (N6-carboxylysine). Substrate is bound at residue H219. The Ni(2+) site is built by H246 and H272. The active-site Proton donor is H320. D360 is a binding site for Ni(2+).

Belongs to the metallo-dependent hydrolases superfamily. Urease alpha subunit family. Heterotrimer of UreA (gamma), UreB (beta) and UreC (alpha) subunits. Three heterotrimers associate to form the active enzyme. The cofactor is Ni cation. Carboxylation allows a single lysine to coordinate two nickel ions.

Its subcellular location is the cytoplasm. It carries out the reaction urea + 2 H2O + H(+) = hydrogencarbonate + 2 NH4(+). The protein operates within nitrogen metabolism; urea degradation; CO(2) and NH(3) from urea (urease route): step 1/1. The polypeptide is Urease subunit alpha (Teredinibacter turnerae (strain ATCC 39867 / T7901)).